The primary structure comprises 158 residues: UPF0262 protein Rsph17025_0594 (158 aa).

The protein belongs to the UPF0262 family.

The chain is UPF0262 protein Rsph17025_0594 from Cereibacter sphaeroides (strain ATCC 17025 / ATH 2.4.3) (Rhodobacter sphaeroides).